The following is a 349-amino-acid chain: N-acetyl-gamma-glutamyl-phosphate reductase (349 aa).

Cys153 is an active-site residue.

Belongs to the NAGSA dehydrogenase family. Type 1 subfamily.

It localises to the cytoplasm. It carries out the reaction N-acetyl-L-glutamate 5-semialdehyde + phosphate + NADP(+) = N-acetyl-L-glutamyl 5-phosphate + NADPH + H(+). It functions in the pathway amino-acid biosynthesis; L-arginine biosynthesis; N(2)-acetyl-L-ornithine from L-glutamate: step 3/4. In terms of biological role, catalyzes the NADPH-dependent reduction of N-acetyl-5-glutamyl phosphate to yield N-acetyl-L-glutamate 5-semialdehyde. In Magnetococcus marinus (strain ATCC BAA-1437 / JCM 17883 / MC-1), this protein is N-acetyl-gamma-glutamyl-phosphate reductase.